Consider the following 403-residue polypeptide: Phosphopentomutase (403 aa).

Residues Asp13, Asp298, His303, Asp339, His340, and His351 each coordinate Mn(2+).

Belongs to the phosphopentomutase family. Mn(2+) serves as cofactor.

The protein resides in the cytoplasm. The enzyme catalyses 2-deoxy-alpha-D-ribose 1-phosphate = 2-deoxy-D-ribose 5-phosphate. The catalysed reaction is alpha-D-ribose 1-phosphate = D-ribose 5-phosphate. It functions in the pathway carbohydrate degradation; 2-deoxy-D-ribose 1-phosphate degradation; D-glyceraldehyde 3-phosphate and acetaldehyde from 2-deoxy-alpha-D-ribose 1-phosphate: step 1/2. Functionally, isomerase that catalyzes the conversion of deoxy-ribose 1-phosphate (dRib-1-P) and ribose 1-phosphate (Rib-1-P) to deoxy-ribose 5-phosphate (dRib-5-P) and ribose 5-phosphate (Rib-5-P), respectively. This chain is Phosphopentomutase, found in Streptococcus pneumoniae serotype 2 (strain D39 / NCTC 7466).